A 41-amino-acid polypeptide reads, in one-letter code: Large ribosomal subunit protein bL36 (41 aa).

It belongs to the bacterial ribosomal protein bL36 family.

This Rickettsia canadensis (strain McKiel) protein is Large ribosomal subunit protein bL36.